Reading from the N-terminus, the 639-residue chain is 3-oxocholoyl-CoA 4-desaturase (639 aa).

Gln-101 contributes to the FMN binding site. Residue 155-158 (HAAH) coordinates substrate. Tyr-160 functions as the Proton donor in the catalytic mechanism. FMN-binding positions include Arg-208, Arg-286, and 308–309 (GR). 2 residues coordinate [4Fe-4S] cluster: Cys-332 and Cys-335. Gln-337 provides a ligand contact to FAD. 2 residues coordinate [4Fe-4S] cluster: Cys-339 and Cys-353. FAD contacts are provided by Ala-383, Glu-402, Gln-410, Lys-420, and Val-447.

It in the N-terminal section; belongs to the NADH:flavin oxidoreductase/NADH oxidase family. It depends on FMN as a cofactor. FAD serves as cofactor. The cofactor is [4Fe-4S] cluster.

The enzyme catalyses 7alpha,12alpha-dihydroxy-3-oxochol-24-oyl-CoA + NAD(+) = 7alpha,12alpha-dihydroxy-3-oxochol-4-en-24-oyl-CoA + NADH + H(+). It catalyses the reaction 7alpha-hydroxy-3-oxochol-24-oyl-CoA + NAD(+) = 7alpha-hydroxy-3-oxochol-4-en-24-oyl-CoA + NADH + H(+). The protein operates within lipid metabolism; bile acid degradation. Functionally, stereo-specific NAD(H)-dependent 3-oxo-delta4-cholenoic acid oxidoreductase involved in bile acid 7alpha-dehydroxylation. In Clostridium scindens (strain JCM 10418 / VPI 12708), this protein is 3-oxocholoyl-CoA 4-desaturase.